The primary structure comprises 246 residues: NAD-dependent protein deacylase (246 aa).

In terms of domain architecture, Deacetylase sirtuin-type spans 2–246; that stretch reads PTAVSDAAAP…AGVCLPAMLA (245 aa). NAD(+) is bound at residue 29-49; sequence GAGVSAESGVPTFRDALTGLW. Residues tyrosine 74 and arginine 77 each coordinate substrate. 107–110 serves as a coordination point for NAD(+); that stretch reads QNVD. Histidine 125 serves as the catalytic Proton acceptor. Zn(2+)-binding residues include cysteine 137, cysteine 140, cysteine 153, and cysteine 156. Residues 193–195, 219–221, and alanine 237 each bind NAD(+); these read GTS and NPE.

This sequence belongs to the sirtuin family. Class III subfamily. Zn(2+) serves as cofactor.

It is found in the cytoplasm. The catalysed reaction is N(6)-acetyl-L-lysyl-[protein] + NAD(+) + H2O = 2''-O-acetyl-ADP-D-ribose + nicotinamide + L-lysyl-[protein]. It carries out the reaction N(6)-succinyl-L-lysyl-[protein] + NAD(+) + H2O = 2''-O-succinyl-ADP-D-ribose + nicotinamide + L-lysyl-[protein]. NAD-dependent lysine deacetylase and desuccinylase that specifically removes acetyl and succinyl groups on target proteins. Modulates the activities of several proteins which are inactive in their acylated form. This Ralstonia nicotianae (strain ATCC BAA-1114 / GMI1000) (Ralstonia solanacearum) protein is NAD-dependent protein deacylase.